The sequence spans 233 residues: Fibroblast growth factor 8 (233 aa).

An N-terminal signal peptide occupies residues 1–22 (MGSPRSALSCLLLHLLVLCLQA). N155 carries an N-linked (GlcNAc...) asparagine glycan.

The protein belongs to the heparin-binding growth factors family. Monomer. Homodimer. Interacts with FGFR1, FGFR2, FGFR3 and FGFR4. Affinity between fibroblast growth factors (FGFs) and their receptors is increased by heparan sulfate glycosaminoglycans that function as coreceptors.

It localises to the secreted. In terms of biological role, plays an important role in the regulation of embryonic development, cell proliferation, cell differentiation and cell migration. Required for normal brain, eye, ear and limb development during embryogenesis. Required for normal development of the gonadotropin-releasing hormone (GnRH) neuronal system. Plays a role in neurite outgrowth in hippocampal cells. This chain is Fibroblast growth factor 8 (FGF8), found in Homo sapiens (Human).